The primary structure comprises 123 residues: DPEP2 neighbor protein (123 aa).

The disordered stretch occupies residues 67–123 (APLATPTKAEAEKPAPRRAPKRRQATIESDKDLGCSSPKIRRLEHRGRRLTPQKLAG). The span at 105-117 (KIRRLEHRGRRLT) shows a compositional bias: basic residues.

The polypeptide is DPEP2 neighbor protein (Homo sapiens (Human)).